The chain runs to 349 residues: Lachesin (349 aa).

An N-terminal signal peptide occupies residues 1–18 (MDLRLYTIFVGFFSVVYA). The 106-residue stretch at 22 to 127 (PTISYISQEQ…NKITAEVDLQ (106 aa)) folds into the Ig-like V-type domain. Cys43 and Cys110 form a disulfide bridge. Ig-like C2-type domains follow at residues 132 to 218 (PVIS…IAVE) and 222 to 315 (PPVI…VELF). Asn137 is a glycosylation site (N-linked (GlcNAc...) asparagine). Intrachain disulfides connect Cys154-Cys201 and Cys244-Cys299. Gly332 carries the GPI-anchor amidated glycine lipid modification. Residues 333–349 (DAAEISTSMALILISTI) constitute a propeptide, removed in mature form.

Post-translationally, the N-terminus is blocked. As to expression, expressed by all neurogenic cells early, but only those cells that become neuroblasts continue to express it. Expressed by neuroblasts, ganglion mother cells and neurons early in their lives, but expression becomes restricted to a subset of neurons as development progresses. Expressed by sensory neurons as they delaminate from the body wall ectoderm. It is also present on growing axons of the CNS and PNS and becomes restricted to a subset of axons later in development.

The protein resides in the cell membrane. Its function is as follows. May play a role in early neuronal differentiation and axon outgrowth. This is Lachesin (LAC) from Schistocerca americana (American grasshopper).